Reading from the N-terminus, the 248-residue chain is Pulmonary surfactant-associated protein A2 (248 aa).

A signal peptide spans 1–20 (MWLCPLALTLILMAASGAAC). In terms of domain architecture, Collagen-like spans 28 to 100 (GSPGIPGTPG…AGERGPPGLP (73 aa)). 9 positions are modified to 4-hydroxyproline: Pro30, Pro33, Pro36, Pro42, Pro54, Pro57, Pro63, Pro67, and Pro70. A disordered region spans residues 33–101 (PGTPGSHGLP…GERGPPGLPA (69 aa)). Residues 42-51 (PGRDGRDGVK) are compositionally biased toward basic and acidic residues. Over residues 54 to 70 (PGPPGPMGPPGETPCPP) the composition is skewed to pro residues. Low complexity predominate over residues 71–82 (GNNGLPGAPGVP). A compositionally biased stretch (basic and acidic residues) spans 84-93 (ERGEKGEAGE). Positions 132-248 (MTVGEKVFSS…LYSRLTICEF (117 aa)) constitute a C-type lectin domain. Intrachain disulfides connect Cys155–Cys246 and Cys224–Cys238. N-linked (GlcNAc...) asparagine glycosylation is present at Asn207.

It belongs to the SFTPA family. Oligomeric complex of 6 set of homotrimers. Post-translationally, N-acetylated.

The protein localises to the secreted. The protein resides in the extracellular space. It is found in the extracellular matrix. It localises to the surface film. Its function is as follows. In presence of calcium ions, it binds to surfactant phospholipids and contributes to lower the surface tension at the air-liquid interface in the alveoli of the mammalian lung and is essential for normal respiration. The chain is Pulmonary surfactant-associated protein A2 (SFTPA2) from Homo sapiens (Human).